The primary structure comprises 149 residues: Large ribosomal subunit protein bL9 (149 aa).

Belongs to the bacterial ribosomal protein bL9 family.

Its function is as follows. Binds to the 23S rRNA. This is Large ribosomal subunit protein bL9 from Syntrophus aciditrophicus (strain SB).